A 342-amino-acid polypeptide reads, in one-letter code: L-threonine 3-dehydrogenase (342 aa).

Zn(2+) is bound at residue Cys-38. Catalysis depends on charge relay system residues Thr-40 and His-43. Zn(2+) is bound by residues His-63, Glu-64, Cys-93, Cys-96, Cys-99, and Cys-107. Residues Ile-175, Asp-195, Arg-200, 262–264 (LGI), and 286–287 (IY) each bind NAD(+).

The protein belongs to the zinc-containing alcohol dehydrogenase family. Homotetramer. Requires Zn(2+) as cofactor.

It is found in the cytoplasm. The catalysed reaction is L-threonine + NAD(+) = (2S)-2-amino-3-oxobutanoate + NADH + H(+). It functions in the pathway amino-acid degradation; L-threonine degradation via oxydo-reductase pathway; glycine from L-threonine: step 1/2. Its function is as follows. Catalyzes the NAD(+)-dependent oxidation of L-threonine to 2-amino-3-ketobutyrate. This chain is L-threonine 3-dehydrogenase, found in Burkholderia cenocepacia (strain ATCC BAA-245 / DSM 16553 / LMG 16656 / NCTC 13227 / J2315 / CF5610) (Burkholderia cepacia (strain J2315)).